The chain runs to 540 residues: MRLAFWLYEGTALHGISRVTNSMKGVHTVYHAPQGDDYITATYTMLERTPEFPGLSISVVRGRDLAQGVSRLPNTLQQVEQHYHPELTVIAPSCSTALLQEDLHQLAAHSGVPPEKLMVYALNPFRVSENEAADGLFTELVKRYATAQDKTAMPSVNILGFTSLGFHLRANLTSLIRILQTLGIAVNVVAPWGGSIGDLAKLPAAWLNIAPYREIGANAAAYLEEQFAMPALYDIPIGVNPTLRWIELLLEKINAMAVARGVAPIEMPPLKAFSLDGMSAPSGVPWFARTADMDSFSNKRAFVFGDATHTVGIVKFLRDELGMQICGAGTYLAQHADWMRKELEGYLPGALMVTDRFQDVASVIEDEMPDLVCGTQMERHSCRKLDVPCMVICPPTHIENHLLGYYPFFGFAGADVIADRVYVSCKLGLEKHLIDFFGDAGLEYEEDAPASNVASGVEPSTPSVSSEVSASSSASPEASAPTPSPDGDMVWTDDAEAMLKKVPFFVRKKVRKNTENFARGIGEPTITLEVFRKAKESLGG.

A [4Fe-4S] cluster-binding site is contributed by D36. The active-site Proton donor is D292. Residue 428–429 (GL) coordinates substrate. A disordered region spans residues 451–490 (SNVASGVEPSTPSVSSEVSASSSASPEASAPTPSPDGDMV). Positions 457–481 (VEPSTPSVSSEVSASSSASPEASAP) are enriched in low complexity.

This sequence belongs to the ChlB/BchB/BchZ family. In terms of assembly, protochlorophyllide reductase is composed of three subunits; BchL, BchN and BchB. Forms a heterotetramer of two BchB and two BchN subunits. The cofactor is [4Fe-4S] cluster.

The catalysed reaction is chlorophyllide a + oxidized 2[4Fe-4S]-[ferredoxin] + 2 ADP + 2 phosphate = protochlorophyllide a + reduced 2[4Fe-4S]-[ferredoxin] + 2 ATP + 2 H2O. Its pathway is porphyrin-containing compound metabolism; bacteriochlorophyll biosynthesis (light-independent). In terms of biological role, component of the dark-operative protochlorophyllide reductase (DPOR) that uses Mg-ATP and reduced ferredoxin to reduce ring D of protochlorophyllide (Pchlide) to form chlorophyllide a (Chlide). This reaction is light-independent. The NB-protein (BchN-BchB) is the catalytic component of the complex. The polypeptide is Light-independent protochlorophyllide reductase subunit B (Chlorobium chlorochromatii (strain CaD3)).